Consider the following 317-residue polypeptide: Nitrilase (317 aa).

The CN hydrolase domain occupies 5 to 280 (VKVAVVQAEP…DGVIISELDM (276 aa)). Residue Glu45 is the Proton acceptor of the active site. The active site involves Lys125. Cys165 acts as the Nucleophile in catalysis.

It belongs to the carbon-nitrogen hydrolase superfamily. Nitrilase family.

It carries out the reaction a nitrile + 2 H2O = a carboxylate + NH4(+). In terms of biological role, nitrilase that hydrolyzes preferentially 4-cyanopyridine. Is also able to hydrolyze some aliphatic nitriles, such as phenylacetonitrile. In Meyerozyma guilliermondii (strain ATCC 6260 / CBS 566 / DSM 6381 / JCM 1539 / NBRC 10279 / NRRL Y-324) (Yeast), this protein is Nitrilase.